A 300-amino-acid polypeptide reads, in one-letter code: 33 kDa chaperonin (300 aa).

2 disulfides stabilise this stretch: cysteine 235–cysteine 237 and cysteine 269–cysteine 272.

Belongs to the HSP33 family. Under oxidizing conditions two disulfide bonds are formed involving the reactive cysteines. Under reducing conditions zinc is bound to the reactive cysteines and the protein is inactive.

The protein resides in the cytoplasm. Its function is as follows. Redox regulated molecular chaperone. Protects both thermally unfolding and oxidatively damaged proteins from irreversible aggregation. Plays an important role in the bacterial defense system toward oxidative stress. The polypeptide is 33 kDa chaperonin (Pseudomonas savastanoi pv. phaseolicola (strain 1448A / Race 6) (Pseudomonas syringae pv. phaseolicola (strain 1448A / Race 6))).